The following is a 194-amino-acid chain: Large ribosomal subunit protein eL15 (194 aa).

Residues 164–194 (SAGKKGRGLRNKGIGAEKVRPSIRAHGRRGK) form a disordered region. A compositionally biased stretch (basic residues) spans 184-194 (PSIRAHGRRGK).

It belongs to the eukaryotic ribosomal protein eL15 family.

The chain is Large ribosomal subunit protein eL15 (rpl15e) from Methanocaldococcus jannaschii (strain ATCC 43067 / DSM 2661 / JAL-1 / JCM 10045 / NBRC 100440) (Methanococcus jannaschii).